Reading from the N-terminus, the 460-residue chain is tRNA modification GTPase MnmE (460 aa).

Positions 29, 86, and 126 each coordinate (6S)-5-formyl-5,6,7,8-tetrahydrofolate. In terms of domain architecture, TrmE-type G spans 222-383 (GMRVVIAGRP…LAEHLKECMG (162 aa)). A K(+)-binding site is contributed by Asn-232. GTP-binding positions include 232–237 (NAGKSS), 251–257 (TAIAGTT), 276–279 (DTAG), and 341–344 (NKAD). Ser-236 is a binding site for Mg(2+). K(+) contacts are provided by Thr-251, Ile-253, and Thr-256. Thr-257 is a Mg(2+) binding site. Lys-460 contributes to the (6S)-5-formyl-5,6,7,8-tetrahydrofolate binding site.

The protein belongs to the TRAFAC class TrmE-Era-EngA-EngB-Septin-like GTPase superfamily. TrmE GTPase family. In terms of assembly, homodimer. Heterotetramer of two MnmE and two MnmG subunits. The cofactor is K(+).

Its subcellular location is the cytoplasm. Exhibits a very high intrinsic GTPase hydrolysis rate. Involved in the addition of a carboxymethylaminomethyl (cmnm) group at the wobble position (U34) of certain tRNAs, forming tRNA-cmnm(5)s(2)U34. The protein is tRNA modification GTPase MnmE of Pseudoalteromonas atlantica (strain T6c / ATCC BAA-1087).